The chain runs to 215 residues: Ribonuclease T (215 aa).

An Exonuclease domain is found at 20 to 194 (VVIDVETAGF…YDTMQTAKLF (175 aa)). Mg(2+) contacts are provided by D23, E25, H181, and D186. H181 functions as the Proton donor/acceptor in the catalytic mechanism.

Belongs to the RNase T family. Homodimer. It depends on Mg(2+) as a cofactor.

Functionally, trims short 3' overhangs of a variety of RNA species, leaving a one or two nucleotide 3' overhang. Responsible for the end-turnover of tRNA: specifically removes the terminal AMP residue from uncharged tRNA (tRNA-C-C-A). Also appears to be involved in tRNA biosynthesis. The chain is Ribonuclease T from Yersinia enterocolitica serotype O:8 / biotype 1B (strain NCTC 13174 / 8081).